Here is a 334-residue protein sequence, read N- to C-terminus: Broad-range acid phosphatase DET1 (334 aa).

Residue His-32 is the Tele-phosphohistidine intermediate of the active site. Substrate is bound by residues Asn-38, 44–45 (NG), and Arg-108. Catalysis depends on Glu-126, which acts as the Proton donor/acceptor. Substrate is bound by residues 168–171 (LNNT) and 195–205 (RVKDEPRIREQ). Ser-248 carries the phosphoserine modification.

This sequence belongs to the phosphoglycerate mutase family.

Its subcellular location is the cytoplasm. The protein resides in the nucleus. Its function is as follows. Metal-independent, broad-range acid phosphatase. Involved, either directly or indirectly, in the bidirectional transport of sterols between the endoplasmic reticulum and the plasma membrane. This Saccharomyces cerevisiae (strain ATCC 204508 / S288c) (Baker's yeast) protein is Broad-range acid phosphatase DET1 (DET1).